A 142-amino-acid chain; its full sequence is Hdr-like menaquinol oxidoreductase cytochrome c subunit (142 aa).

The Cytoplasmic segment spans residues Met-1–Tyr-6. Residues Val-7 to Met-27 form a helical membrane-spanning segment. Over Ala-28–Ser-142 the chain is Extracellular. Cys-93, Cys-96, His-97, Cys-104, Cys-107, His-108, Cys-117, Cys-120, and His-121 together coordinate heme.

In terms of assembly, consists of five subunits: an integral membrane subunit, a cytochrome b-like subunit, a cytochrome c subunit and two iron-sulfur subunits. Binds 3 heme groups per subunit.

It localises to the cell membrane. Its function is as follows. Has menaquinol-oxidizing activity. HmeA, HmeB and HmeE subunits may together catalyze electron transfer from menaquinol to cytochrome c. The polypeptide is Hdr-like menaquinol oxidoreductase cytochrome c subunit (hmeE) (Archaeoglobus fulgidus (strain ATCC 49558 / DSM 4304 / JCM 9628 / NBRC 100126 / VC-16)).